Here is a 541-residue protein sequence, read N- to C-terminus: Pseudokinase FAM20A (541 aa).

A signal peptide spans 1–33 (MPGLRRDRLLTLLLLGALLSADLYFHLWPQVQR). Residues 38-90 (RERPRGCPCTGRASSLARDSAAAASDPGTIVHNFSRTEPRTEPAGGSHSGSSS) are disordered. Over residues 49 to 63 (RASSLARDSAAAASD) the composition is skewed to low complexity. Residues Asn-70, Asn-145, and Asn-287 are each glycosylated (N-linked (GlcNAc...) asparagine). 4 cysteine pairs are disulfide-bonded: Cys-314–Cys-330, Cys-319–Cys-323, Cys-378–Cys-452, and Cys-453–Cys-512. An N-linked (GlcNAc...) asparagine glycan is attached at Asn-388. Residue Asn-538 is glycosylated (N-linked (GlcNAc...) asparagine).

The protein belongs to the FAM20 family. In terms of assembly, interacts with FAM20C; probably forming a heterotetramer of 2 subunits of FAM20A and 2 subunits of FAM20C. N-glycosylated. Highly expressed in lung and liver. Intermediate levels in thymus and ovary.

Its subcellular location is the secreted. It is found in the golgi apparatus. The protein resides in the endoplasmic reticulum. In terms of biological role, pseudokinase that acts as an allosteric activator of the Golgi serine/threonine protein kinase FAM20C and is involved in biomineralization of teeth. Forms a complex with FAM20C and increases the ability of FAM20C to phosphorylate the proteins that form the 'matrix' that guides the deposition of the enamel minerals. In Homo sapiens (Human), this protein is Pseudokinase FAM20A.